A 396-amino-acid polypeptide reads, in one-letter code: Apurinic-apyrimidinic endonuclease (396 aa).

Over residues 31-41 the composition is skewed to basic residues; it reads KGRGKIQKHIQ. Residues 31–100 form a disordered region; the sequence is KGRGKIQKHI…TSGETIAQKK (70 aa). The span at 55–70 shows a compositional bias: polar residues; the sequence is NQSPGTTVEETLTEEN. A compositionally biased stretch (basic and acidic residues) spans 72–85; the sequence is STDKEETSKLENKP. Zn(2+) is bound by residues histidine 185, histidine 225, glutamate 261, aspartate 295, histidine 298, histidine 332, aspartate 345, histidine 347, and glutamate 377.

Belongs to the AP endonuclease 2 family. Zn(2+) is required as a cofactor.

The protein localises to the nucleus. The protein is Apurinic-apyrimidinic endonuclease (apn-1) of Caenorhabditis elegans.